A 964-amino-acid polypeptide reads, in one-letter code: Iron-responsive element-binding protein 2 (964 aa).

3 residues coordinate [4Fe-4S] cluster: Cys513, Cys579, and Cys582.

It belongs to the aconitase/IPM isomerase family. Interacts with RBCK1 only in iron-rich conditions. Interacts (when associated with the 4Fe-4S) with FBXL5. Interacts with CIAO1 and CIAO2A. Requires [4Fe-4S] cluster as cofactor. In terms of processing, ubiquitinated and degraded by the proteasome in presence of high level of iron and oxygen. Ubiquitinated by a SCF complex containing FBXL5. Upon iron and oxygen depletion FBXL5 is degraded, preventing ubiquitination and allowing its RNA-binding activity.

The protein localises to the cytoplasm. RNA-binding protein that binds to iron-responsive elements (IRES), which are stem-loop structures found in the 5'-UTR of ferritin, and delta aminolevulinic acid synthase mRNAs, and in the 3'-UTR of transferrin receptor mRNA. Binding to the IRE element in ferritin results in the repression of its mRNA translation. Binding of the protein to the transferrin receptor mRNA inhibits the degradation of this otherwise rapidly degraded mRNA. In Sus scrofa (Pig), this protein is Iron-responsive element-binding protein 2 (IREB2).